We begin with the raw amino-acid sequence, 155 residues long: Type 1 phosphatases regulator YPI1 (155 aa).

A compositionally biased stretch (polar residues) spans 1–21 (MSGNQMAMGSEQQQTVGSRTV). Disordered regions lie at residues 1 to 56 (MSGN…WEEN) and 79 to 155 (EDEE…EKKD). Serine 2 carries the post-translational modification N-acetylserine. Position 22 is a phosphoserine (serine 22). The GLC7-binding motif lies at 51 to 53 (VRW). The segment covering 93–102 (SSSSGSSSSE) has biased composition (low complexity). Residues 104 to 114 (ENEKDLDFNER) show a composition bias toward basic and acidic residues. The segment covering 115–128 (RQRRLERRHRKLEK) has biased composition (basic residues). Serine 133 bears the Phosphoserine mark. Positions 144-155 (SEYRRKQQEKKD) are enriched in basic and acidic residues.

It belongs to the YPI1 family. In terms of assembly, interacts with GLC7, PPZ1 and SDS22.

The protein resides in the nucleus. In terms of biological role, regulator of type 1 phosphatases which maintains protein phosphatase activity under strict control. Regulates the nuclear localization of type 1 phosphatase GLC7 and SDS22, and is involved in the regulation of mRNA 3'-end processing. May also regulate the activity of type 1 phosphatase PPZ1. The sequence is that of Type 1 phosphatases regulator YPI1 (YPI1) from Saccharomyces cerevisiae (strain YJM789) (Baker's yeast).